The following is a 285-amino-acid chain: Probable endonuclease 4 (285 aa).

9 residues coordinate Zn(2+): histidine 69, histidine 109, glutamate 145, aspartate 179, histidine 182, histidine 216, aspartate 229, histidine 231, and glutamate 261.

It belongs to the AP endonuclease 2 family. Zn(2+) serves as cofactor.

It carries out the reaction Endonucleolytic cleavage to 5'-phosphooligonucleotide end-products.. Functionally, endonuclease IV plays a role in DNA repair. It cleaves phosphodiester bonds at apurinic or apyrimidinic (AP) sites, generating a 3'-hydroxyl group and a 5'-terminal sugar phosphate. This is Probable endonuclease 4 from Salmonella agona (strain SL483).